Reading from the N-terminus, the 37-residue chain is Large ribosomal subunit protein bL36 (37 aa).

Belongs to the bacterial ribosomal protein bL36 family.

The chain is Large ribosomal subunit protein bL36 from Mesomycoplasma hyopneumoniae (strain 7448) (Mycoplasma hyopneumoniae).